Here is a 390-residue protein sequence, read N- to C-terminus: GTPase Obg (390 aa).

One can recognise an Obg domain in the interval 1 to 159 (MKFVDEAAIL…RDILLELLLL (159 aa)). The 174-residue stretch at 160-333 (ADVGMLGLPN…LCWDVMKFIN (174 aa)) folds into the OBG-type G domain. GTP is bound by residues 166–173 (GLPNAGKS), 191–195 (FTTLV), 213–216 (DIPG), 283–286 (NKID), and 314–316 (SAV). Ser-173 and Thr-193 together coordinate Mg(2+). The span at 366-384 (AEADDDWDDDWDEEDDEGV) shows a compositional bias: acidic residues. The segment at 366–390 (AEADDDWDDDWDEEDDEGVEIIYQK) is disordered.

Belongs to the TRAFAC class OBG-HflX-like GTPase superfamily. OBG GTPase family. Monomer. Requires Mg(2+) as cofactor.

Its subcellular location is the cytoplasm. An essential GTPase which binds GTP, GDP and possibly (p)ppGpp with moderate affinity, with high nucleotide exchange rates and a fairly low GTP hydrolysis rate. Plays a role in control of the cell cycle, stress response, ribosome biogenesis and in those bacteria that undergo differentiation, in morphogenesis control. The protein is GTPase Obg of Serratia proteamaculans (strain 568).